Here is a 537-residue protein sequence, read N- to C-terminus: CTP synthase (537 aa).

The amidoligase domain stretch occupies residues 1–268; that stretch reads MNTKYIFVTG…DNLVCKKLKL (268 aa). S14 lines the CTP pocket. S14 contacts UTP. Position 15-20 (15-20) interacts with ATP; sequence SLGKGI. Residue Y55 coordinates L-glutamine. D72 is an ATP binding site. Mg(2+) contacts are provided by D72 and E142. CTP contacts are provided by residues 149–151, 189–194, and K225; these read DIE and KTKPTQ. Residues 189–194 and K225 contribute to the UTP site; that span reads KTKPTQ. Residues 293–535 enclose the Glutamine amidotransferase type-1 domain; it reads NIALVGKYVE…IKASLNSKHK (243 aa). G355 is a binding site for L-glutamine. C382 functions as the Nucleophile; for glutamine hydrolysis in the catalytic mechanism. L-glutamine contacts are provided by residues 383–386, E406, and R463; that span reads LGMQ. Residues H508 and E510 contribute to the active site.

This sequence belongs to the CTP synthase family. Homotetramer.

It catalyses the reaction UTP + L-glutamine + ATP + H2O = CTP + L-glutamate + ADP + phosphate + 2 H(+). It carries out the reaction L-glutamine + H2O = L-glutamate + NH4(+). The catalysed reaction is UTP + NH4(+) + ATP = CTP + ADP + phosphate + 2 H(+). It functions in the pathway pyrimidine metabolism; CTP biosynthesis via de novo pathway; CTP from UDP: step 2/2. Allosterically activated by GTP, when glutamine is the substrate; GTP has no effect on the reaction when ammonia is the substrate. The allosteric effector GTP functions by stabilizing the protein conformation that binds the tetrahedral intermediate(s) formed during glutamine hydrolysis. Inhibited by the product CTP, via allosteric rather than competitive inhibition. Catalyzes the ATP-dependent amination of UTP to CTP with either L-glutamine or ammonia as the source of nitrogen. Regulates intracellular CTP levels through interactions with the four ribonucleotide triphosphates. This chain is CTP synthase, found in Clostridium kluyveri (strain ATCC 8527 / DSM 555 / NBRC 12016 / NCIMB 10680 / K1).